The sequence spans 457 residues: Biphenyl dioxygenase subunit alpha (457 aa).

In terms of domain architecture, Rieske spans 58–174 (WLMLGHETHI…VETYKGLVFA (117 aa)). The [2Fe-2S] cluster site is built by C100, H102, C120, and H123. 2 residues coordinate Fe cation: H233 and H239.

It belongs to the bacterial ring-hydroxylating dioxygenase alpha subunit family. Heterohexamer consisting of three BphA subunits and three BphE subunits. A ferredoxin (BphF) and a ferredoxin reductase (BphG) must be present to obtain activity. [2Fe-2S] cluster is required as a cofactor. The cofactor is Fe cation.

The enzyme catalyses biphenyl + NADH + O2 + H(+) = (2R,3S)-3-phenylcyclohexa-3,5-diene-1,2-diol + NAD(+). It functions in the pathway xenobiotic degradation; biphenyl degradation; 2-hydroxy-2,4-pentadienoate and benzoate from biphenyl: step 1/4. This chain is Biphenyl dioxygenase subunit alpha (bphA), found in Comamonas testosteroni (Pseudomonas testosteroni).